The chain runs to 282 residues: MMMLPEACIANILAFTSPADAFSSSEVSSVFRLAGDSDFVWEKFLPSDYKSLISQSTDHHWNISSKKEIYRCLCDSLLIDNARKLFKINKFSGKISYVLSARDISITHSDHASYWSWSNVSDSRFSESAELIITDRLEIEGKIQTRVLSANTRYGAYLIVKVTKGAYGLDLVPAETSIKSKNGQISKSATYLCCLDEKKQQMKRLFYGNREERMAMTVEAVGGDGKRREPKCRDDGWMEIELGEFETREGEDDEVNMTLTEVKGYQLKGGILIDGIEVRPKT.

The F-box domain occupies 1–44 (MMMLPEACIANILAFTSPADAFSSSEVSSVFRLAGDSDFVWEKF).

As to quaternary structure, component of SCF(VBF) E3 ubiquitin ligase complex that interacts with VIP1. Interacts directly with SKP1A and VIP1. Forms a complex composed of VIP1, VBF and Agrobacterium virE2.

Functionally, component of SCF(VBF) E3 ubiquitin ligase complexes, which mediate the ubiquitination and subsequent proteasomal degradation of target proteins such as VIP1 and Agrobacterium virE2, after their implication in T-DNA translocation to the host nucleus (can functionally replace Agrobacterium VirF). Required during Agrobacterium-induced tumor formation. The protein is F-box protein VBF (VBF) of Arabidopsis thaliana (Mouse-ear cress).